Reading from the N-terminus, the 478-residue chain is Membrane-bound lytic murein transglycosylase F (478 aa).

An N-terminal signal peptide occupies residues 1 to 22 (MTRFLFAIILGFLLTACQQVTV). The non-LT domain stretch occupies residues 23–257 (EETEYVPHKL…HLNEKYFGHV (235 aa)). An LT domain region spans residues 258–478 (KRFDYIDTRA…PGTLSPDKPK (221 aa)). Glu302 is a catalytic residue. The tract at residues 446–478 (SKQQNSDEEEPSDLASEDGPAPVPGTLSPDKPK) is disordered. Acidic residues predominate over residues 451-461 (SDEEEPSDLAS).

It in the N-terminal section; belongs to the bacterial solute-binding protein 3 family. The protein in the C-terminal section; belongs to the transglycosylase Slt family.

It localises to the cell outer membrane. The catalysed reaction is Exolytic cleavage of the (1-&gt;4)-beta-glycosidic linkage between N-acetylmuramic acid (MurNAc) and N-acetylglucosamine (GlcNAc) residues in peptidoglycan, from either the reducing or the non-reducing ends of the peptidoglycan chains, with concomitant formation of a 1,6-anhydrobond in the MurNAc residue.. In terms of biological role, murein-degrading enzyme that degrades murein glycan strands and insoluble, high-molecular weight murein sacculi, with the concomitant formation of a 1,6-anhydromuramoyl product. Lytic transglycosylases (LTs) play an integral role in the metabolism of the peptidoglycan (PG) sacculus. Their lytic action creates space within the PG sacculus to allow for its expansion as well as for the insertion of various structures such as secretion systems and flagella. The sequence is that of Membrane-bound lytic murein transglycosylase F from Shewanella sp. (strain ANA-3).